We begin with the raw amino-acid sequence, 77 residues long: U14-theraphotoxin-Cg1a 1 (77 aa).

Positions 1 to 21 are cleaved as a signal peptide; the sequence is MKTSVLLVILGIAAITVQCTA. The propeptide occupies 22–49; sequence SESVEQDSLRTFVDAVLGWNAEMASEAR. 3 disulfide bridges follow: Cys50-Cys64, Cys57-Cys69, and Cys63-Cys75. Lys77 is modified (lysine amide).

Belongs to the neurotoxin 10 (Hwtx-1) family. 65 (Jztx-21) subfamily. In terms of tissue distribution, expressed by the venom gland.

Its subcellular location is the secreted. Functionally, probable ion channel inhibitor. This chain is U14-theraphotoxin-Cg1a 1, found in Chilobrachys guangxiensis (Chinese earth tiger tarantula).